A 260-amino-acid polypeptide reads, in one-letter code: DNA repair protein RecO (260 aa).

This sequence belongs to the RecO family.

Its function is as follows. Involved in DNA repair and RecF pathway recombination. This is DNA repair protein RecO from Salinibacter ruber (strain DSM 13855 / M31).